We begin with the raw amino-acid sequence, 1418 residues long: Alpha-latrotoxin-Lhe1a (1418 aa).

A signal peptide spans 1–20; it reads MIFVGETMERANHSLVRLRR. The furin-like endopeptidase recognition region stretch occupies residues 17–20; sequence RLRR. Residues 238–257 form a helix H8 is the probable transmembrane region of the tetrameric pore inserted in the target cell membrane region; sequence VLYALLYGTQTYISVMFFLL. An intrachain disulfide couples cysteine 413 to cysteine 1066. 22 ANK repeats span residues 458-489, 490-521, 525-554, 559-589, 593-622, 626-656, 660-690, 695-723, 729-758, 762-791, 795-824, 828-857, 862-891, 895-924, 928-957, 971-1003, 1004-1033, 1035-1064, 1068-1097, 1101-1131, 1137-1166, and 1170-1199; these read LYNAASNPDSAVGFKEFTKLNYDGANIRATFD, QGRTIFHAVAKSGNDKILFGLTFLVKSTELNQ, KGYTPIHVAADSGNAGIVNLLIQRGVSINS, FLQTPLHLAAQRGFVNTFQRLMESSEININE, DGFTPLHYAVRGGERILEAFMNQIGIDVNA, KGLTPFHLAIIKNDWQVASTLLRNKKVDINA, NNMTALHYAAILGYLETTKQLINLKEINANV, GLLSALHYAILYKHDDVASFLLRSSNVNV, GGITPLHLAVMQGRKQVLSLMFNIGVNIEQ, EKYTPLHLAAMSKYPELIQILLDQDSNFEA, SGATPLHLATFKGKSQAALILLNNEVNWRD, NGQMPIHGAATTGLLDVAQAIISIDATVLD, NSDTPLNLAAQNSHIDAVKYFIDQGADINT, NGHAPLLAFSKKGNLDMVKYLFDKNANVYI, NGMNFFYYAVRNGHLNIIKYAMSEKDKFEW, EECAISHFAVCDAVQFDKIEIVKFFIGTLGNFN, ICGPLHQAARYGHLHIVKYLVEEEVLSVDG, KTDTPLCYASENGHLAVVQYLVSNGAKVNH, NGMTAIDKAITKNHLQVVQFLAANGVDFRR, RGATPFLTAVAENAFDIAEYLIREKRQDINI, DKETALHLAVYYKNLQMIKLLVKYGIDVTI, and YDKTVLDIATDAKFSNIVKYLKKNSGKFRR. Residues 1026-1032 form a 4C4.1 epitope region; sequence EEVLSVD. Positions 1196 to 1199 are furin-like endopeptidase recognition region; it reads KFRR. Residues 1200–1418 constitute a propeptide that is removed on maturation; that stretch reads EYKSSYGEHS…SEKKIQKISI (219 aa).

The protein belongs to the cationic peptide 01 (latrotoxin) family. 03 (alpha-latrotoxin) subfamily. In terms of assembly, homotetramer in membranes. Post-translationally, processed by furin-like proteases at both the N- and C-termini. Expressed in venom gland, cephalothorax, and abdomen tissues from both males and females.

It localises to the secreted. Its subcellular location is the target cell membrane. In terms of biological role, presynaptic neurotoxin that causes massive release of neurotransmitters from vertebrate (but not invertebrate) nerve terminals and endocrine cells via a complex mechanism involving activation of receptor(s) and toxin insertion into the plasma membrane with subsequent pore formation. Binds to neurexin-1-alpha (NRXN1) in a calcium dependent manner, adhesion G protein-coupled receptor L1 (ADGRL1, also termed latrophilin-1 and calcium-independent receptor of latrotoxin (CIRL)), and receptor-type tyrosine-protein phosphatase S (PTPRS), also termed PTP sigma. NRXN1 and PTPRS are suggested to provide a platform for binding and subsequent pore formation events. In contrast, binding to ADGRL1 does not involve oligomerization and channel formation, but direct downstream stimulation of the synaptic fusion machinery. The sequence is that of Alpha-latrotoxin-Lhe1a from Latrodectus hesperus (Western black widow spider).